The chain runs to 630 residues: tRNA uridine 5-carboxymethylaminomethyl modification enzyme MnmG (630 aa).

13-18 is a binding site for FAD; the sequence is GGGHAG. An NAD(+)-binding site is contributed by 273–287; the sequence is GPRYCPSIEDKVMRF.

This sequence belongs to the MnmG family. As to quaternary structure, homodimer. Heterotetramer of two MnmE and two MnmG subunits. Requires FAD as cofactor.

Its subcellular location is the cytoplasm. NAD-binding protein involved in the addition of a carboxymethylaminomethyl (cmnm) group at the wobble position (U34) of certain tRNAs, forming tRNA-cmnm(5)s(2)U34. In Actinobacillus pleuropneumoniae serotype 5b (strain L20), this protein is tRNA uridine 5-carboxymethylaminomethyl modification enzyme MnmG.